The following is a 431-amino-acid chain: MENKSNSQILFAEAQQYIPGGVNSPVRAFKSVGQEFPRFIKFAKGAYLYDVDWNKYIDYIGSWGPMILGHCDDDVLEAIQCQVKNGLSYGAPCKQEVDLAKKIIELMPNIEQVRFVNSGTEATMSAIRLARAYTCRNKIIKFEGCYHGHADEFLVAAGSGALSLGQPNSPGVPEDVVKDTLVASFNDMESIQALFEKYKDEIACIIVEPIAGNMNMIFPQDDFLAKLRAICDQNSSLLIFDEVMTGFRVALGGAQSIYNVKPDLTTLGKVIGGGMPVGAFGGRKEIMQKVSPAGPVYQAGTLSGNPIAMTAGIKTLEKISQPGLFDELGAKAQKLVDGLNEAAKAYDFNFHAKCLGGMFGLFFCSDKIAVNTFVDLGKTNLKMFNQFFAYMLDNGVYLAPSAYEAGFISIAHSDEDIEKTICLAKKFFQEN.

Lys-269 bears the N6-(pyridoxal phosphate)lysine mark.

The protein belongs to the class-III pyridoxal-phosphate-dependent aminotransferase family. HemL subfamily. As to quaternary structure, homodimer. Pyridoxal 5'-phosphate is required as a cofactor.

It localises to the cytoplasm. It carries out the reaction (S)-4-amino-5-oxopentanoate = 5-aminolevulinate. Its pathway is porphyrin-containing compound metabolism; protoporphyrin-IX biosynthesis; 5-aminolevulinate from L-glutamyl-tRNA(Glu): step 2/2. The protein is Glutamate-1-semialdehyde 2,1-aminomutase of Francisella tularensis subsp. tularensis (strain WY96-3418).